The following is a 612-amino-acid chain: Elongation factor 4 (612 aa).

Residues 12 to 194 (SRIRNFSIIA…QIVEKVPAPA (183 aa)) form the tr-type G domain. GTP contacts are provided by residues 24 to 29 (DHGKST) and 141 to 144 (NKID).

Belongs to the TRAFAC class translation factor GTPase superfamily. Classic translation factor GTPase family. LepA subfamily.

It is found in the cell membrane. It catalyses the reaction GTP + H2O = GDP + phosphate + H(+). Functionally, required for accurate and efficient protein synthesis under certain stress conditions. May act as a fidelity factor of the translation reaction, by catalyzing a one-codon backward translocation of tRNAs on improperly translocated ribosomes. Back-translocation proceeds from a post-translocation (POST) complex to a pre-translocation (PRE) complex, thus giving elongation factor G a second chance to translocate the tRNAs correctly. Binds to ribosomes in a GTP-dependent manner. This Bacillus pumilus (strain SAFR-032) protein is Elongation factor 4.